Consider the following 306-residue polypeptide: MNYGKEQVAVYRTYANPLEGVRTIPESSFDGRDNILFGLEVRVQFEGEEFLPSFSEADNTTVVATDSMKNFVLHQAGEYEGATAEGFLHFVGTEFLETYPHVEAVTMSATEYPFDERPVPGDDGFDPSDLVFRVSDDESAFGEIYLEREGDELRFEEQTSGVTEIELVKVKENSFTGYVQDEYTTLPEREDRALYISLDVFWTYSDPEDALGDEPQRYVPAEQVRDIAQVVFHEVNSNSIQDLIYQIGLRVLERYPQLESVNFEANNRTWIEVRDDLDGDAKVLREPPRPTGYQQFSMDRSDLEEQ.

Active-site charge relay system residues include lysine 5 and threonine 65. Residues threonine 65, aspartate 66, phenylalanine 175, arginine 192, isoleucine 240, glutamine 241, and asparagine 267 each contribute to the urate site. The disordered stretch occupies residues 281–306; sequence AKVLREPPRPTGYQQFSMDRSDLEEQ.

This sequence belongs to the uricase family.

It catalyses the reaction urate + O2 + H2O = 5-hydroxyisourate + H2O2. The protein operates within purine metabolism; urate degradation; (S)-allantoin from urate: step 1/3. In terms of biological role, catalyzes the oxidation of uric acid to 5-hydroxyisourate, which is further processed to form (S)-allantoin. In Halalkalicoccus jeotgali (strain DSM 18796 / CECT 7217 / JCM 14584 / KCTC 4019 / B3), this protein is Uricase.